A 271-amino-acid chain; its full sequence is Phosphonoacetaldehyde hydrolase (271 aa).

Residue Asp-12 is the Nucleophile of the active site. Positions 12 and 14 each coordinate Mg(2+). The Schiff-base intermediate with substrate role is filled by Lys-54. Asp-188 is a Mg(2+) binding site.

Belongs to the HAD-like hydrolase superfamily. PhnX family. As to quaternary structure, homodimer. Mg(2+) serves as cofactor.

The enzyme catalyses phosphonoacetaldehyde + H2O = acetaldehyde + phosphate + H(+). In terms of biological role, involved in phosphonate degradation. In Aliivibrio salmonicida (strain LFI1238) (Vibrio salmonicida (strain LFI1238)), this protein is Phosphonoacetaldehyde hydrolase.